Consider the following 212-residue polypeptide: Thymidylate kinase (212 aa).

Residue 11–18 (GPEGAGKT) participates in ATP binding.

This sequence belongs to the thymidylate kinase family.

The catalysed reaction is dTMP + ATP = dTDP + ADP. Its function is as follows. Phosphorylation of dTMP to form dTDP in both de novo and salvage pathways of dTTP synthesis. The protein is Thymidylate kinase of Streptococcus pneumoniae (strain CGSP14).